The following is a 270-amino-acid chain: Mediator of RNA polymerase II transcription subunit 4 (270 aa).

A disordered region spans residues 1 to 22 (MAASSSGEKEKERMGGVSGMTG). The residue at position 2 (Ala-2) is an N-acetylalanine. Residues 26–131 (TRERLLSALE…ATAVYQAKEK (106 aa)) adopt a coiled-coil conformation. Ser-32 is subject to Phosphoserine. A disordered region spans residues 227–270 (MSVNMLPPNHSTDFLLEPPGHNKENEDDVEVMSTDSSSSSSDSD). Low complexity predominate over residues 259 to 270 (STDSSSSSSDSD).

Belongs to the Mediator complex subunit 4 family. As to quaternary structure, component of the Mediator complex, which is composed of MED1, MED4, MED6, MED7, MED8, MED9, MED10, MED11, MED12, MED13, MED13L, MED14, MED15, MED16, MED17, MED18, MED19, MED20, MED21, MED22, MED23, MED24, MED25, MED26, MED27, MED29, MED30, MED31, CCNC, CDK8 and CDC2L6/CDK11. The MED12, MED13, CCNC and CDK8 subunits form a distinct module termed the CDK8 module. Mediator containing the CDK8 module is less active than Mediator lacking this module in supporting transcriptional activation. Individual preparations of the Mediator complex lacking one or more distinct subunits have been variously termed ARC, CRSP, DRIP, PC2, SMCC and TRAP.

Its subcellular location is the nucleus. Component of the Mediator complex, a coactivator involved in the regulated transcription of nearly all RNA polymerase II-dependent genes. Mediator functions as a bridge to convey information from gene-specific regulatory proteins to the basal RNA polymerase II transcription machinery. Mediator is recruited to promoters by direct interactions with regulatory proteins and serves as a scaffold for the assembly of a functional preinitiation complex with RNA polymerase II and the general transcription factors. The polypeptide is Mediator of RNA polymerase II transcription subunit 4 (Med4) (Rattus norvegicus (Rat)).